The following is a 335-amino-acid chain: Olfactory receptor 10R2 (335 aa).

At M1–L45 the chain is on the extracellular side. N25 carries an N-linked (GlcNAc...) asparagine glycan. A helical transmembrane segment spans residues A46–I66. The Cytoplasmic segment spans residues S67–S74. The chain crosses the membrane as a helical span at residues L75–F95. Over V96–L119 the chain is Extracellular. C117 and C209 are joined by a disulfide. The helical transmembrane segment at Q120–Y140 threads the bilayer. Residues D141–Q159 are Cytoplasmic-facing. A helical membrane pass occupies residues V160 to V180. The Extracellular portion of the chain corresponds to N181–F217. The chain crosses the membrane as a helical span at residues V218 to S237. The Cytoplasmic portion of the chain corresponds to Y238–A257. A helical transmembrane segment spans residues F258–I278. Residues Y279–D291 are Extracellular-facing. Residues R292 to L312 traverse the membrane as a helical segment. Over R313–N335 the chain is Cytoplasmic.

The protein belongs to the G-protein coupled receptor 1 family.

Its subcellular location is the cell membrane. In terms of biological role, odorant receptor. The polypeptide is Olfactory receptor 10R2 (OR10R2) (Homo sapiens (Human)).